Consider the following 405-residue polypeptide: L-carnitine CoA-transferase (405 aa).

K97 and R104 together coordinate CoA. D169 functions as the Nucleophile in the catalytic mechanism.

It belongs to the CoA-transferase III family. CaiB subfamily. Homodimer.

The protein resides in the cytoplasm. It carries out the reaction crotonobetainyl-CoA + (R)-carnitine = crotonobetaine + (R)-carnitinyl-CoA. The catalysed reaction is 4-(trimethylamino)butanoyl-CoA + (R)-carnitine = (R)-carnitinyl-CoA + 4-(trimethylamino)butanoate. It participates in amine and polyamine metabolism; carnitine metabolism. Its function is as follows. Catalyzes the reversible transfer of the CoA moiety from gamma-butyrobetainyl-CoA to L-carnitine to generate L-carnitinyl-CoA and gamma-butyrobetaine. Is also able to catalyze the reversible transfer of the CoA moiety from gamma-butyrobetainyl-CoA or L-carnitinyl-CoA to crotonobetaine to generate crotonobetainyl-CoA. The protein is L-carnitine CoA-transferase of Escherichia coli O6:K15:H31 (strain 536 / UPEC).